A 350-amino-acid polypeptide reads, in one-letter code: DNA polymerase delta subunit 3 (350 aa).

The disordered stretch occupies residues 131 to 350 (EEKSKPLVRP…LESFFKRKAK (220 aa)). Basic and acidic residues-rich tracts occupy residues 146–162 (TTPE…KDMG) and 172–195 (MKKD…EENL). At threonine 223 the chain carries Phosphothreonine. Serine 230 is modified (phosphoserine). Residues 234–248 (SPKETDSNDKDKNND) show a composition bias toward basic and acidic residues. Positions 249-262 (DLEDLLETTAEDSL) are enriched in acidic residues. The segment covering 274–286 (SETEHSKEPKSEE) has biased composition (basic and acidic residues). Polar residues predominate over residues 320–332 (LSSSKKQETPSSN).

As to quaternary structure, DNA polymerase delta is a heterotrimer of POL3, POL32 and HYS2. POL32 can form homodimers.

It localises to the nucleus. In terms of biological role, DNA polymerase delta (DNA polymerase III) participates in chromosomal DNA replication. It is required during synthesis of the leading and lagging DNA strands at the replication fork and binds at/or near replication origins and moves along DNA with the replication fork. It has 3'-5' proofreading exonuclease activity that correct errors arising during DNA replication. It is also involved in DNA synthesis during DNA repair. This Saccharomyces cerevisiae (strain ATCC 204508 / S288c) (Baker's yeast) protein is DNA polymerase delta subunit 3 (POL32).